Here is a 485-residue protein sequence, read N- to C-terminus: T-complex protein 1 subunit theta (485 aa).

This sequence belongs to the TCP-1 chaperonin family. Component of the T-complex protein 1 (TCP1) complex.

Its subcellular location is the cytoplasm. In terms of biological role, molecular chaperone; assists the folding of proteins upon ATP hydrolysis. In Encephalitozoon cuniculi (strain GB-M1) (Microsporidian parasite), this protein is T-complex protein 1 subunit theta (CCT8).